A 431-amino-acid polypeptide reads, in one-letter code: Septin-11 (431 aa).

Ala-2 is subject to N-acetylalanine. At Ser-9 the chain carries Phosphoserine. Residues 38–304 (QGFCFNILCV…ELYRRCKLEE (267 aa)) enclose the Septin-type G domain. The interval 48–55 (GETGIGKS) is G1 motif. Residues 48 to 55 (GETGIGKS), Gly-103, 184 to 192 (KADTIAKNE), Gly-238, and Arg-253 each bind GTP. The G3 motif stretch occupies residues 100–103 (DTVG). Residues 183–186 (AKAD) are G4 motif. Residues 320–413 (QETYEAKRNE…LLQSQAQQSG (94 aa)) adopt a coiled-coil conformation. The segment at 400-431 (AAAQLLQSQAQQSGAQQTKKDKDKKNPWLCTE) is disordered. Residues 401-416 (AAQLLQSQAQQSGAQQ) show a composition bias toward low complexity.

Belongs to the TRAFAC class TrmE-Era-EngA-EngB-Septin-like GTPase superfamily. Septin GTPase family. Septins polymerize into heterooligomeric protein complexes that form filaments, and can associate with cellular membranes, actin filaments and microtubules. Forms homooligomers. GTPase activity is required for filament formation. Interacts with SEPTIN7, SEPTIN9 and SEPTIN12. As to expression, expressed in the cerebral cortex (at protein level).

It is found in the cytoplasm. The protein resides in the cytoskeleton. Its subcellular location is the synapse. The protein localises to the cell projection. It localises to the dendritic spine. It is found in the axon. In terms of biological role, filament-forming cytoskeletal GTPase. May play a role in cytokinesis (Potential). May play a role in the cytoarchitecture of neurons, including dendritic arborization and dendritic spines, and in GABAergic synaptic connectivity. The sequence is that of Septin-11 from Mus musculus (Mouse).